Here is a 496-residue protein sequence, read N- to C-terminus: Beta-amylase (496 aa).

Substrate contacts are provided by Asp54, His94, and Asp102. The Proton donor role is filled by Glu187. Substrate-binding residues include Lys296, His301, and Thr343. Glu381 acts as the Proton acceptor in catalysis. Residues 382–383 and Arg421 each bind substrate; that span reads NA.

The protein belongs to the glycosyl hydrolase 14 family.

The enzyme catalyses Hydrolysis of (1-&gt;4)-alpha-D-glucosidic linkages in polysaccharides so as to remove successive maltose units from the non-reducing ends of the chains.. This is Beta-amylase (BMY1) from Vigna unguiculata (Cowpea).